Here is a 303-residue protein sequence, read N- to C-terminus: Exosome complex component RRP4 homolog (303 aa).

Positions Gly175–Pro213 constitute a KH domain.

This sequence belongs to the RRP4 family. Component of the RNA exosome complex. As to expression, ubiquitously expressed.

It is found in the nucleus. The protein localises to the nucleolus. Its subcellular location is the nucleoplasm. In terms of biological role, non-catalytic component of the RNA exosome complex which has 3'-&gt;5' exoribonuclease activity and participates in a multitude of cellular RNA processing and degradation events. Involved in regulation of antisense ribosomal siRNA production. Involved in response to cold-warm shock. This chain is Exosome complex component RRP4 homolog, found in Caenorhabditis elegans.